The chain runs to 123 residues: MPTIQQLVRKGRQDKVEKNKTPALEGSPQRRGVCTRVFTTTPKKPNSALRKVARVRLTSGIEVTAYIPGEGHNLQEHSIVLVRGGRVKDLPGVRYKIIRGSLDTQGVKNRKQARSRYGAKKEK.

Positions Met-1–Arg-30 are disordered. The segment covering Gly-11–Lys-20 has biased composition (basic and acidic residues). Position 89 is a 3-methylthioaspartic acid (Asp-89).

The protein belongs to the universal ribosomal protein uS12 family. As to quaternary structure, part of the 30S ribosomal subunit. Contacts proteins S8 and S17. May interact with IF1 in the 30S initiation complex.

Functionally, with S4 and S5 plays an important role in translational accuracy. In terms of biological role, interacts with and stabilizes bases of the 16S rRNA that are involved in tRNA selection in the A site and with the mRNA backbone. Located at the interface of the 30S and 50S subunits, it traverses the body of the 30S subunit contacting proteins on the other side and probably holding the rRNA structure together. The combined cluster of proteins S8, S12 and S17 appears to hold together the shoulder and platform of the 30S subunit. In Streptomyces avermitilis (strain ATCC 31267 / DSM 46492 / JCM 5070 / NBRC 14893 / NCIMB 12804 / NRRL 8165 / MA-4680), this protein is Small ribosomal subunit protein uS12 (rpsL).